The following is a 522-amino-acid chain: Maturase K (522 aa).

The protein belongs to the intron maturase 2 family. MatK subfamily.

The protein resides in the plastid. It localises to the chloroplast. Usually encoded in the trnK tRNA gene intron. Probably assists in splicing its own and other chloroplast group II introns. This chain is Maturase K, found in Sapindus saponaria (Soapberry).